A 337-amino-acid chain; its full sequence is Fructose-1,6-bisphosphatase class 1 (337 aa).

Glu89, Asp112, Leu114, and Asp115 together coordinate Mg(2+). Residues 115–118, Asn208, Tyr241, and Lys271 contribute to the substrate site; that span reads DGSS. Residue Glu277 coordinates Mg(2+).

The protein belongs to the FBPase class 1 family. As to quaternary structure, homotetramer. The cofactor is Mg(2+).

It localises to the cytoplasm. It carries out the reaction beta-D-fructose 1,6-bisphosphate + H2O = beta-D-fructose 6-phosphate + phosphate. Its pathway is carbohydrate biosynthesis; gluconeogenesis. This Yersinia pestis bv. Antiqua (strain Antiqua) protein is Fructose-1,6-bisphosphatase class 1.